Reading from the N-terminus, the 389-residue chain is MKKLLKSALLSAAFAGSVGSLQALPVGNPSDPSLLIDGTIWEGAAGDPCDPCATWCDAISLRAGFYGDYVFDRILKIDAPKTFSMGAKPTGSATANYTTAVDRPNPAYNKHLYDAEWFTNAGFIALNIWDRFDVFCTLGASNGYVKGNSAAFNLVGLFGVKGTSVNANELPNVSLSNGVIELYTDTTFAWSVGARGALWECGCATLGAEFQYAQSKPKVEELNVICNVSQFSLNKPKGYKGVAFPLPTDAGVVTAAGTKSATINYHEWQVGASLSYRLNSLVPYIGVQWSRATFDADNIRIAQPKLPTAILNLTAWNPSLLGSATAVSSSDQFSDFMQIVSCQINKFKSRKACGVTVGATLVDADKWSLTAEARLINERAAHISGQFRF.

An N-terminal signal peptide occupies residues 1 to 23; that stretch reads MKKLLKSALLSAAFAGSVGSLQA.

The protein belongs to the chlamydial porin (CP) (TC 1.B.2) family. In terms of assembly, part of a disulfide cross-linked outer membrane complex (COMC) composed of the major outer membrane porin (MOMP), the small cysteine-rich protein (OmcA) and the large cysteine-rich periplasmic protein (OmcB).

The protein localises to the cell outer membrane. In terms of biological role, in elementary bodies (EBs, the infectious stage, which is able to survive outside the host cell) provides the structural integrity of the outer envelope through disulfide cross-links with the small cysteine-rich protein and the large cysteine-rich periplasmic protein. It has been described in publications as the Sarkosyl-insoluble COMC (Chlamydia outer membrane complex), and serves as the functional equivalent of peptidoglycan. Its function is as follows. Permits diffusion of specific solutes through the outer membrane. This chain is Major outer membrane porin (ompA), found in Chlamydia pneumoniae (Chlamydophila pneumoniae).